Consider the following 127-residue polypeptide: Cyclin-dependent kinase 2-associated protein 2 (127 aa).

A disordered region spans residues 1-47 (MSYKPIAPAPSSTPGSSTPGPGTPVPTAGSVPSPSGSVPGAAAPFRP). Residues 9-44 (APSSTPGSSTPGPGTPVPTAGSVPSPSGSVPGAAAP) are compositionally biased toward low complexity. The segment at 65-107 (PPGSQGSQSTYTDLLSVIEEMGKEIRPTYAGSKSAMERLKRGI) is interaction with CDK2.

This sequence belongs to the CDK2AP family. Component of the nucleosome remodeling and deacetylase (NuRD) repressor complex, composed of core proteins MTA1, MTA2, MTA3, RBBP4, RBBP7, HDAC1, HDAC2, MBD2, MBD3, and peripherally associated proteins CDK2AP1, CDK2AP2, GATAD2A, GATAD2B, CHD3, CHD4 and CHD5. The exact stoichiometry of the NuRD complex is unknown, and some subunits such as MBD2 and MBD3, GATAD2A and GATAD2B, and CHD3, CHD4 and CHD5 define mutually exclusive NuRD complexes. Interacts with CDK2AP1. Interacts with CDK2. Interacts with MAPK1. In terms of processing, phosphorylated by MAPK1 and CDK2. As to expression, oocytes (at protein level).

The protein localises to the cytoplasm. It localises to the nucleus. Acts as a component of the histone deacetylase NuRD complex which participates in the remodeling of chromatin. Inhibits cell cycle G1/S phase transition by repressing CDK2 expression and activation; represses CDK2 activation by inhibiting its interaction with cyclin E and A. Plays a role in regulating the self-renewal of embryonic stem cells (ESCs) and in maintaining cell survival during terminal differentiation of ESCs. Regulates microtubule organization of metaphase II oocytes. The chain is Cyclin-dependent kinase 2-associated protein 2 (Cdk2ap2) from Mus musculus (Mouse).